We begin with the raw amino-acid sequence, 290 residues long: Arylamine N-acetyltransferase 1 (290 aa).

Met1 carries the N-acetylmethionine modification. Residue Cys68 is the Acyl-thioester intermediate of the active site. The CoA site is built by Thr103 and Gly104. 106–107 (IH) serves as a coordination point for substrate. Catalysis depends on residues His107 and Asp122. CoA is bound by residues Tyr208 and Ser214.

It belongs to the arylamine N-acetyltransferase family.

The protein resides in the cytoplasm. It catalyses the reaction an arylamine + acetyl-CoA = an N-acetylarylamine + CoA. Its function is as follows. Participates in the detoxification of a plethora of hydrazine and arylamine drugs. Catalyzes the N- or O-acetylation of various arylamine and heterocyclic amine substrates and is able to bioactivate several known carcinogens. The sequence is that of Arylamine N-acetyltransferase 1 (NAT1) from Homo sapiens (Human).